The chain runs to 234 residues: Serum amyloid P-component (234 aa).

Positions 1-22 (MDKLLSLLGVSILAGLLLEAFA) are cleaved as a signal peptide. The region spanning 27 to 226 (TGKVFVFPRQ…YAVIRPRCVA (200 aa)) is the Pentraxin (PTX) domain. A glycan (N-linked (GlcNAc...) asparagine) is linked at N54. C58 and C117 are joined by a disulfide. Residues N81, E158, Q159, D160, and Q170 each contribute to the Ca(2+) site.

Belongs to the pentraxin family. As to quaternary structure, homopentamer. Pentraxin (or pentaxin) have a discoid arrangement of 5 non-covalently bound subunits. The cofactor is Ca(2+).

It localises to the secreted. In Mesocricetus auratus (Golden hamster), this protein is Serum amyloid P-component (APCS).